The sequence spans 389 residues: Putative cyclin-F3-1 (389 aa).

The segment at 1–103 (MEAAAAAAAE…GAAGGSRQPV (103 aa)) is disordered. A compositionally biased stretch (low complexity) spans 19-43 (VEGAAVAAVAPEAAAEGPSEPNAGE).

This sequence belongs to the cyclin family. Cyclin F subfamily.

In Oryza sativa subsp. japonica (Rice), this protein is Putative cyclin-F3-1 (CYCF3-1).